A 309-amino-acid polypeptide reads, in one-letter code: MDAFQSILKFFLNQKTAIGYSFMALLTVGSERLFSLVAFKCPCSVENTAYGLVFLFAPAWVLLILGFFLNNKAWRLFTGCCMNPKKIFPRRRCCRFFYVLGHIILSSLVAPVMWLSVALLNGTFYECAMSGTRSTRLLEMICKGKPKECWEELHKVSCGKSSMAAMESEEVRLSLQAQSQILGWCLICSASFLSLLTTCYARCRSKVSYLQLSFWKTYAQREKEQLENKLLECANKLSERNLKCFFENKKPDPFPMPSFGAWEAASELHSFHQDREHYSTLHKVVDDGMEQTPQEEETTMILVGTAQSL.

At 1 to 15 (MDAFQSILKFFLNQK) the chain is on the cytoplasmic side. The chain crosses the membrane as a helical span at residues 16–37 (TAIGYSFMALLTVGSERLFSLV). A 1,2-diacyl-sn-glycero-3-phosphate contacts are provided by Arg-32 and Val-37. Over 38 to 45 (AFKCPCSV) the chain is Extracellular. Intrachain disulfides connect Cys-41/Cys-127, Cys-43/Cys-158, and Cys-142/Cys-149. A helical transmembrane segment spans residues 46-70 (ENTAYGLVFLFAPAWVLLILGFFLN). Residues 71–99 (NKAWRLFTGCCMNPKKIFPRRRCCRFFYV) lie on the Cytoplasmic side of the membrane. Residues 100–129 (LGHIILSSLVAPVMWLSVALLNGTFYECAM) form a helical membrane-spanning segment. Position 121 (Asn-121) interacts with a 1,2-diacyl-sn-glycero-3-phosphate. Topologically, residues 130–174 (SGTRSTRLLEMICKGKPKECWEELHKVSCGKSSMAAMESEEVRLS) are extracellular. The helical transmembrane segment at 175-200 (LQAQSQILGWCLICSASFLSLLTTCY) threads the bilayer. Topologically, residues 201 to 309 (ARCRSKVSYL…MILVGTAQSL (109 aa)) are cytoplasmic. Arg-202 lines the a 1,2-diacyl-sn-glycero-3-phosphate pocket.

Belongs to the CALHM family. In terms of assembly, oligomerizes to form undecameric cone-shaped channels.

The protein localises to the membrane. Its function is as follows. May assemble to form large pore channels with gating and ion conductance likely regulated by membrane lipids. The sequence is that of Calcium homeostasis modulator protein 5 from Mus musculus (Mouse).